The chain runs to 296 residues: Probable endonuclease 4 (296 aa).

Residues His68, His109, Glu144, Asp178, His181, His213, Asp226, His228, and Glu258 each coordinate Zn(2+).

Belongs to the AP endonuclease 2 family. Zn(2+) serves as cofactor.

The catalysed reaction is Endonucleolytic cleavage to 5'-phosphooligonucleotide end-products.. Endonuclease IV plays a role in DNA repair. It cleaves phosphodiester bonds at apurinic or apyrimidinic (AP) sites, generating a 3'-hydroxyl group and a 5'-terminal sugar phosphate. The protein is Probable endonuclease 4 of Staphylococcus aureus (strain MRSA252).